Here is a 451-residue protein sequence, read N- to C-terminus: UDP-N-acetylmuramoylalanine--D-glutamate ligase (451 aa).

119–125 (GSNGKTT) contributes to the ATP binding site.

This sequence belongs to the MurCDEF family.

The protein localises to the cytoplasm. The catalysed reaction is UDP-N-acetyl-alpha-D-muramoyl-L-alanine + D-glutamate + ATP = UDP-N-acetyl-alpha-D-muramoyl-L-alanyl-D-glutamate + ADP + phosphate + H(+). Its pathway is cell wall biogenesis; peptidoglycan biosynthesis. In terms of biological role, cell wall formation. Catalyzes the addition of glutamate to the nucleotide precursor UDP-N-acetylmuramoyl-L-alanine (UMA). In Bacillus cytotoxicus (strain DSM 22905 / CIP 110041 / 391-98 / NVH 391-98), this protein is UDP-N-acetylmuramoylalanine--D-glutamate ligase.